A 115-amino-acid polypeptide reads, in one-letter code: Promotilin (115 aa).

An N-terminal signal peptide occupies residues 1-25 (MVSRKAVAALLVVHVAAMLASQTEA). The segment at 39–72 (QEKERNKGQKKSLSVWQRSGEEGPVDPAEPIREE) is disordered.

This sequence belongs to the motilin family.

The protein resides in the secreted. Functionally, plays an important role in the regulation of interdigestive gastrointestinal motility and indirectly causes rhythmic contraction of duodenal and colonic smooth muscle. This Homo sapiens (Human) protein is Promotilin (MLN).